The chain runs to 294 residues: Glycine--tRNA ligase alpha subunit (294 aa).

It belongs to the class-II aminoacyl-tRNA synthetase family. Tetramer of two alpha and two beta subunits.

It is found in the cytoplasm. It carries out the reaction tRNA(Gly) + glycine + ATP = glycyl-tRNA(Gly) + AMP + diphosphate. This Lawsonia intracellularis (strain PHE/MN1-00) protein is Glycine--tRNA ligase alpha subunit.